The primary structure comprises 621 residues: MDYQTLLQNQLLSSNNIDYLVELIISNFRISKKATIKCINIITNNLSTYLNNIDRFPENNNELVDAINFLNNKCIEDFAIYLTNKYPNTNIFRNSSNQSSQSNQVNQSNQSSPSSQISPSSQVNKFNQSSQINQSNQINQSNQINQSNQLNHHSEEFQEFIILTEQEKNHLLKTHGINSLTTDKKKYKKTIEDDVITILSNPIMMQMFGLMLNQSSQPKKPDIIFDQILDSKQVIELKNQFQNKSVVSKSTESKTNLGSNTNIIINSKINHETDNKFSNKPNGNNDETNDKTNNETNDETNDETDNDDEIDNNIDLNVKLDNITTSDVPVILDKLRNLKILRETYVNKGNKKIANKIQNKIIQIVETLNAYKNKQSQIAIEAKNKIKHITVSNKEVSENIELIELEFNPNCDLEMLTENNYINLKNLFIKKIPDRKITDITLVEYLLPNNDYNITKFNNKFKIYSNSRLYSIDIPPSKYEINTLLSYIKNQLQFIDFQINDDNIISIKSQTDFELIVDRIEETVFPILGFNGKQSDYKDKSEYIATKSYNLNSKVYFSLQGVAMEPIEVIMGTKISYNKSIKKSSAGITIKNLVLNFKTELDQFYDFNDTFKMSLSITYQS.

2 disordered regions span residues 92 to 134 (FRNS…QINQ) and 268 to 310 (KINH…DDEI). The segment covering 94–134 (NSSNQSSQSNQVNQSNQSSPSSQISPSSQVNKFNQSSQINQ) has biased composition (low complexity). The span at 296-310 (TNDETNDETDNDDEI) shows a compositional bias: acidic residues. Residues 354–401 (ANKIQNKIIQIVETLNAYKNKQSQIAIEAKNKIKHITVSNKEVSENIE) are a coiled coil.

This is an uncharacterized protein from Acanthamoeba polyphaga mimivirus (APMV).